The following is a 562-amino-acid chain: Dihydroxy-acid dehydratase (562 aa).

A Mg(2+)-binding site is contributed by Asp-78. Cys-119 contacts [2Fe-2S] cluster. Residues Asp-120 and Lys-121 each contribute to the Mg(2+) site. Position 121 is an N6-carboxylysine (Lys-121). Cys-192 lines the [2Fe-2S] cluster pocket. Residue Glu-450 coordinates Mg(2+). Catalysis depends on Ser-476, which acts as the Proton acceptor.

This sequence belongs to the IlvD/Edd family. As to quaternary structure, homodimer. [2Fe-2S] cluster serves as cofactor. It depends on Mg(2+) as a cofactor.

The enzyme catalyses (2R)-2,3-dihydroxy-3-methylbutanoate = 3-methyl-2-oxobutanoate + H2O. It carries out the reaction (2R,3R)-2,3-dihydroxy-3-methylpentanoate = (S)-3-methyl-2-oxopentanoate + H2O. Its pathway is amino-acid biosynthesis; L-isoleucine biosynthesis; L-isoleucine from 2-oxobutanoate: step 3/4. It functions in the pathway amino-acid biosynthesis; L-valine biosynthesis; L-valine from pyruvate: step 3/4. In terms of biological role, functions in the biosynthesis of branched-chain amino acids. Catalyzes the dehydration of (2R,3R)-2,3-dihydroxy-3-methylpentanoate (2,3-dihydroxy-3-methylvalerate) into 2-oxo-3-methylpentanoate (2-oxo-3-methylvalerate) and of (2R)-2,3-dihydroxy-3-methylbutanoate (2,3-dihydroxyisovalerate) into 2-oxo-3-methylbutanoate (2-oxoisovalerate), the penultimate precursor to L-isoleucine and L-valine, respectively. In Nautilia profundicola (strain ATCC BAA-1463 / DSM 18972 / AmH), this protein is Dihydroxy-acid dehydratase.